A 167-amino-acid chain; its full sequence is Translationally-controlled tumor protein homolog (167 aa).

A TCTP domain is found at methionine 1–isoleucine 167.

Belongs to the TCTP family.

The protein localises to the cytoplasm. It localises to the cytoskeleton. Involved in protein synthesis. Involved in microtubule stabilization. The sequence is that of Translationally-controlled tumor protein homolog from Candida glabrata (strain ATCC 2001 / BCRC 20586 / JCM 3761 / NBRC 0622 / NRRL Y-65 / CBS 138) (Yeast).